A 1132-amino-acid chain; its full sequence is Serine/threonine-protein kinase spk-1 (1132 aa).

A helical membrane pass occupies residues 75 to 95 (GGSLILTDIFPTVLFMFVVLF). 2 disordered regions span residues 240–388 (NEDQ…DSDD) and 419–481 (NKKA…KRGG). 2 stretches are compositionally biased toward acidic residues: residues 281-290 (SEDEDVESQE) and 311-336 (DEPI…LGDE). Over residues 362 to 372 (DSSVSSSTSST) the composition is skewed to low complexity. Residues 373–388 (PDDDEDDSATSYDSDD) show a composition bias toward acidic residues. Residues 421–433 (KAEVNANEERMDD) show a composition bias toward basic and acidic residues. Over residues 434–443 (VSVSPGRSDS) the composition is skewed to low complexity. A Protein kinase domain is found at 495-1044 (YHVIRKLGWG…ANDALKHPFL (550 aa)). Residues 501-509 (LGWGHFSTV) and Lys524 each bind ATP. The Proton acceptor role is filled by Asp628. A disordered region spans residues 1066–1121 (QVPEALDGNQEVYRDENDSNSASERSANRSAGSDDEEEFHMDRPGPSGVINEPADV). Over residues 1084-1096 (SNSASERSANRSA) the composition is skewed to low complexity.

Belongs to the protein kinase superfamily. Ser/Thr protein kinase family.

The protein localises to the membrane. The catalysed reaction is L-seryl-[protein] + ATP = O-phospho-L-seryl-[protein] + ADP + H(+). It carries out the reaction L-threonyl-[protein] + ATP = O-phospho-L-threonyl-[protein] + ADP + H(+). Functionally, required for embryogenesis and germline development in both adult hermaphrodites and males. SR-protein kinase (SRPK) that binds directly to and phosphorylates RS domains. This chain is Serine/threonine-protein kinase spk-1 (spk-1), found in Caenorhabditis briggsae.